Reading from the N-terminus, the 430-residue chain is UDP-glucose 6-dehydrogenase AglM (430 aa).

The active site involves C269.

This sequence belongs to the UDP-glucose/GDP-mannose dehydrogenase family.

It catalyses the reaction UDP-alpha-D-glucose + 2 NAD(+) + H2O = UDP-alpha-D-glucuronate + 2 NADH + 3 H(+). Its pathway is nucleotide-sugar biosynthesis; UDP-alpha-D-glucuronate biosynthesis; UDP-alpha-D-glucuronate from UDP-alpha-D-glucose: step 1/1. The protein operates within cell surface structure biogenesis; S-layer biogenesis. Activity improves as salinity decreases. Functionally, involved in the assembly of a N-linked pentasaccharide that decorates the S-layer glycoprotein and flagellins. Involved in the biosynthesis of the hexuronic acids found at both positions 2 and 3 of the pentasaccharide. In Haloferax volcanii (strain ATCC 29605 / DSM 3757 / JCM 8879 / NBRC 14742 / NCIMB 2012 / VKM B-1768 / DS2) (Halobacterium volcanii), this protein is UDP-glucose 6-dehydrogenase AglM (aglM).